The following is a 120-amino-acid chain: Large ribosomal subunit protein uL18 (120 aa).

This sequence belongs to the universal ribosomal protein uL18 family. Part of the 50S ribosomal subunit; part of the 5S rRNA/L5/L18/L25 subcomplex. Contacts the 5S and 23S rRNAs.

In terms of biological role, this is one of the proteins that bind and probably mediate the attachment of the 5S RNA into the large ribosomal subunit, where it forms part of the central protuberance. The sequence is that of Large ribosomal subunit protein uL18 from Staphylococcus saprophyticus subsp. saprophyticus (strain ATCC 15305 / DSM 20229 / NCIMB 8711 / NCTC 7292 / S-41).